Here is a 409-residue protein sequence, read N- to C-terminus: Endoglucanase B (409 aa).

Positions 1–21 (MKLKRIAALLTAAVMSVGVMA) are cleaved as a signal peptide. The tract at residues 23-66 (CGGSKSDDKSKADTKSAAETSGAEGDSSESEEIPVSQTHTNDPM) is disordered. The span at 27 to 38 (KSDDKSKADTKS) shows a compositional bias: basic and acidic residues. A compositionally biased stretch (polar residues) spans 57–66 (VSQTHTNDPM). Catalysis depends on Glu212, which acts as the Proton donor. The active-site Nucleophile is Glu332.

The protein belongs to the glycosyl hydrolase 5 (cellulase A) family.

It carries out the reaction Endohydrolysis of (1-&gt;4)-beta-D-glucosidic linkages in cellulose, lichenin and cereal beta-D-glucans.. The polypeptide is Endoglucanase B (celB) (Ruminococcus albus).